The sequence spans 275 residues: Prohibitin-1 (275 aa).

The short motif at 106-109 (YQNL) is the AIM element.

Belongs to the prohibitin family. The mitochondrial prohibitin complex consists of two subunits (PHB1 and PHB2). The subunits assemble into a membrane-associated ring-shaped supercomplex of approximately 1 mDa. Interacts with ATG24/SNX4; the interaction is direct and plays a role in mitophagy.

It is found in the mitochondrion inner membrane. In terms of biological role, prohibitin probably acts as a holdase/unfoldase for the stabilization of newly synthesized mitochondrial proteins. Involved in mitophagy. Required for the switch to necrotrophic growth. In Colletotrichum higginsianum (strain IMI 349063) (Crucifer anthracnose fungus), this protein is Prohibitin-1.